Reading from the N-terminus, the 394-residue chain is Elongation factor Tu (394 aa).

In terms of domain architecture, tr-type G spans 10–204; it reads KPHVNVGTIG…AVDEWIPTPE (195 aa). The interval 19-26 is G1; that stretch reads GHIDHGKT. 19 to 26 lines the GTP pocket; that stretch reads GHIDHGKT. Threonine 26 is a binding site for Mg(2+). Residues 60 to 64 are G2; it reads GITIN. A G3 region spans residues 81 to 84; that stretch reads DCPG. GTP contacts are provided by residues 81-85 and 136-139; these read DCPGH and NKCD. The segment at 136-139 is G4; the sequence is NKCD. Residues 174 to 176 form a G5 region; it reads SAL.

Belongs to the TRAFAC class translation factor GTPase superfamily. Classic translation factor GTPase family. EF-Tu/EF-1A subfamily. In terms of assembly, monomer.

The protein localises to the cytoplasm. It catalyses the reaction GTP + H2O = GDP + phosphate + H(+). In terms of biological role, GTP hydrolase that promotes the GTP-dependent binding of aminoacyl-tRNA to the A-site of ribosomes during protein biosynthesis. In Mycoplasma pneumoniae (strain ATCC 29342 / M129 / Subtype 1) (Mycoplasmoides pneumoniae), this protein is Elongation factor Tu.